The sequence spans 793 residues: Copalyl diphosphate synthase CPS1, chloroplastic (793 aa).

The transit peptide at 1–59 (MASLSSTILSRSPAARRRITPASAKLHRPECFATSAWMGSSSKNLSLSYQLNHKKISVA) directs the protein to the chloroplast. Lysine 238 lines the substrate pocket. 2 residues coordinate Mg(2+): aspartate 370 and aspartate 372. Positions 370–373 (DIDD) match the DXDD motif motif. Residue lysine 457 coordinates substrate.

It belongs to the terpene synthase family. Mg(2+) serves as cofactor.

Its subcellular location is the plastid. The protein resides in the chloroplast. The enzyme catalyses (2E,6E,10E)-geranylgeranyl diphosphate = (+)-copalyl diphosphate. Its pathway is secondary metabolite biosynthesis; terpenoid biosynthesis. Functionally, involved in tanshinone biosynthesis in hairy roots. Catalyzes the conversion of geranylgeranyl diphosphate (GGPP) to copalyl diphosphate (CPP). This chain is Copalyl diphosphate synthase CPS1, chloroplastic, found in Salvia miltiorrhiza (Chinese sage).